The sequence spans 347 residues: Ryncolin-3 (347 aa).

A signal peptide spans 1–19 (MKPWAAFHLIFLVASSVEG). The region spanning 57-114 (GIPGVPGINGSEGLKGDPGPQGLPGETGFDGIPGVAGPKGDKGDQGDKGDKGDKGDKG) is the Collagen-like domain. Residues 62-115 (PGINGSEGLKGDPGPQGLPGETGFDGIPGVAGPKGDKGDQGDKGDKGDKGDKGD) form a disordered region. Positions 95–115 (KGDKGDQGDKGDKGDKGDKGD) are enriched in basic and acidic residues. In terms of domain architecture, Fibrinogen C-terminal spans 121 to 341 (DCPPTDVEVR…YADMKIRPQQ (221 aa)). 2 disulfides stabilise this stretch: C132–C160 and C284–C297.

This sequence belongs to the ficolin lectin family. Veficolin subfamily. Hydroxylated. In terms of tissue distribution, expressed by the venom duct.

The protein localises to the secreted. In terms of biological role, initiates complement activation and/or interferes in platelet aggregation and/or blood coagulation. This chain is Ryncolin-3, found in Cerberus rynchops (Dog-faced water snake).